The primary structure comprises 476 residues: Proline--tRNA ligase (476 aa).

The protein belongs to the class-II aminoacyl-tRNA synthetase family. ProS type 3 subfamily. In terms of assembly, homodimer.

It is found in the cytoplasm. The catalysed reaction is tRNA(Pro) + L-proline + ATP = L-prolyl-tRNA(Pro) + AMP + diphosphate. In terms of biological role, catalyzes the attachment of proline to tRNA(Pro) in a two-step reaction: proline is first activated by ATP to form Pro-AMP and then transferred to the acceptor end of tRNA(Pro). In Cenarchaeum symbiosum (strain A), this protein is Proline--tRNA ligase.